A 173-amino-acid chain; its full sequence is Invasion protein B homolog BruAb1_0366 (173 aa).

A signal peptide spans 1 to 23; it reads MKNYRAIGLAFTFTALSSLSAFA.

Belongs to the IalB family.

The sequence is that of Invasion protein B homolog BruAb1_0366 from Brucella abortus biovar 1 (strain 9-941).